Reading from the N-terminus, the 211-residue chain is Small ribosomal subunit protein uS3 (211 aa).

A KH type-2 domain is found at 38–106 (LRKFIKKAFY…NIELNIIEVK (69 aa)).

Belongs to the universal ribosomal protein uS3 family. As to quaternary structure, part of the 30S ribosomal subunit. Forms a tight complex with proteins S10 and S14.

In terms of biological role, binds the lower part of the 30S subunit head. Binds mRNA in the 70S ribosome, positioning it for translation. This chain is Small ribosomal subunit protein uS3, found in Ehrlichia ruminantium (strain Gardel).